Reading from the N-terminus, the 805-residue chain is Acetyl-CoA decarbonylase/synthase complex subunit alpha 2 (805 aa).

Positions 72, 75, 76, 78, 83, and 93 each coordinate [4Fe-4S] cluster. CO is bound at residue histidine 116. Histidine 249, cysteine 277, and cysteine 322 together coordinate [Ni-4Fe-4S] cluster. 4Fe-4S ferredoxin-type domains are found at residues 407-435 (EEFKVYIDKCVKCGECMLACPEELDIPEA) and 445-474 (EYLEALHDVCIGCRRCEQVCKKEIPILNVL). 8 residues coordinate [4Fe-4S] cluster: cysteine 416, cysteine 419, cysteine 422, cysteine 426, cysteine 454, cysteine 457, cysteine 460, and cysteine 464. 3 residues coordinate [Ni-4Fe-4S] cluster: cysteine 522, cysteine 551, and cysteine 586.

Belongs to the Ni-containing carbon monoxide dehydrogenase family. As to quaternary structure, heterotetramer of two alpha and two epsilon subunits. The ACDS complex is made up of alpha, epsilon, beta, gamma and delta subunits with a probable stoichiometry of (alpha(2)epsilon(2))(4)-beta(8)-(gamma(1)delta(1))(8). It depends on [4Fe-4S] cluster as a cofactor. Requires [Ni-4Fe-4S] cluster as cofactor.

It catalyses the reaction CO + 2 oxidized [2Fe-2S]-[ferredoxin] + H2O = 2 reduced [2Fe-2S]-[ferredoxin] + CO2 + 2 H(+). It functions in the pathway one-carbon metabolism; methanogenesis from acetate. Functionally, part of the ACDS complex that catalyzes the reversible cleavage of acetyl-CoA, allowing growth on acetate as sole source of carbon and energy. The alpha-epsilon subcomponent functions as a carbon monoxide dehydrogenase. In Methanosarcina acetivorans (strain ATCC 35395 / DSM 2834 / JCM 12185 / C2A), this protein is Acetyl-CoA decarbonylase/synthase complex subunit alpha 2.